We begin with the raw amino-acid sequence, 213 residues long: Ribonuclease HII (213 aa).

The RNase H type-2 domain maps to 27–213; the sequence is HAVAGVDEAG…FRGVKEHVAP (187 aa). The a divalent metal cation site is built by Asp-33, Glu-34, and Asp-125.

The protein belongs to the RNase HII family. It depends on Mn(2+) as a cofactor. Mg(2+) serves as cofactor.

Its subcellular location is the cytoplasm. It catalyses the reaction Endonucleolytic cleavage to 5'-phosphomonoester.. Its function is as follows. Endonuclease that specifically degrades the RNA of RNA-DNA hybrids. The polypeptide is Ribonuclease HII (Geobacter metallireducens (strain ATCC 53774 / DSM 7210 / GS-15)).